We begin with the raw amino-acid sequence, 228 residues long: Urease accessory protein UreF 1 (228 aa).

Belongs to the UreF family. UreD, UreF and UreG form a complex that acts as a GTP-hydrolysis-dependent molecular chaperone, activating the urease apoprotein by helping to assemble the nickel containing metallocenter of UreC. The UreE protein probably delivers the nickel.

It localises to the cytoplasm. Its function is as follows. Required for maturation of urease via the functional incorporation of the urease nickel metallocenter. This chain is Urease accessory protein UreF 1, found in Brucella anthropi (strain ATCC 49188 / DSM 6882 / CCUG 24695 / JCM 21032 / LMG 3331 / NBRC 15819 / NCTC 12168 / Alc 37) (Ochrobactrum anthropi).